A 513-amino-acid polypeptide reads, in one-letter code: MKNSMNVSEIASIIREKVETFDNPIKRENIGEVISVTDGIALVYGLEKAKFGEKVFFASGVEGIVLDLDHNTAGIVVLGNDRDVKEGDVVKCSGDVVQVPVGHELLGRVVNALGHPMDDGGEIRAKNRMDIESKAPGIIDRKSVHEPLQTGIKIIDLLIPIGRGQRELIIGDRQIGKTTIALDTIINQKKVNDEVNENQKVYCVYVAIGQKISTVAKVVNKLKESGALEYTTVVVASASDCAPMQFLAPYAGCTIGEFFRDNGMHCLIIYDDLSKHAVAYRQMSLLLRRPPGREAYPGDIFYVHSRLLERAAKMSDKKGQGSLTALPIVETQAGDVSAYVPTNVISITDGQIFLESELFYKGFRPAVNIGLSVSRVGSAAQLKSVKKVAGSIKLSLAQYRELEDFAKFGSDLDASVQLSLNKGKYLVELLKQKQHLPMSIEEQVVLMYIFSNLYNQLSKIQISNVNKFEHDLVNYFRTVHPGVLKKLSNDMNGDIKGDIFNIVSNFVTQFNCV.

171 to 178 (GDRQIGKT) contributes to the ATP binding site.

This sequence belongs to the ATPase alpha/beta chains family. F-type ATPases have 2 components, CF(1) - the catalytic core - and CF(0) - the membrane proton channel. CF(1) has five subunits: alpha(3), beta(3), gamma(1), delta(1), epsilon(1). CF(0) has three main subunits: a(1), b(2) and c(9-12). The alpha and beta chains form an alternating ring which encloses part of the gamma chain. CF(1) is attached to CF(0) by a central stalk formed by the gamma and epsilon chains, while a peripheral stalk is formed by the delta and b chains.

It localises to the cell membrane. The catalysed reaction is ATP + H2O + 4 H(+)(in) = ADP + phosphate + 5 H(+)(out). Produces ATP from ADP in the presence of a proton gradient across the membrane. The alpha chain is a regulatory subunit. The protein is ATP synthase subunit alpha of Wolbachia pipientis wMel.